A 943-amino-acid chain; its full sequence is Coiled-coil and C2 domain-containing protein 1A (943 aa).

A Phosphothreonine modification is found at T91. Disordered regions lie at residues 186 to 250 (NEAD…CSPL) and 300 to 337 (DLSR…VPQP). Composition is skewed to low complexity over residues 195–206 (ASGKGAAAGHSH) and 229–238 (APSTTTPTSA). S248 is subject to Phosphoserine. The span at 304–319 (LPPPPDQLSPEPPLPA) shows a compositional bias: pro residues. Residues 339 to 385 (RNLLEALEQRMERYHVAAAQAKAKGDQRKARMHERIVKQYQDAIRAH) are a coiled coil. Residues 430-483 (NHDEGSDDEEEETPKKQNTPAASTTQLKSSPSKAPPSGPAPAGKAAPKGTSNRA) form a disordered region. Phosphoserine is present on S435. Residues 445–456 (KQNTPAASTTQL) show a composition bias toward polar residues. The span at 469 to 478 (APAGKAAPKG) shows a compositional bias: low complexity. A coiled-coil region spans residues 477–510 (KGTSNRAQQQLAFLEGRKKQLLQAALRAKQKNDV). The C2 domain maps to 630-764 (RFEQRTFSVI…ETACEVHEIL (135 aa)).

It belongs to the CC2D1 family. Highly expressed in brain, expression is enriched in the gray matter and strongest in the olfactory bulb.

The protein resides in the cytoplasm. Its subcellular location is the nucleus. It is found in the cytoskeleton. The protein localises to the microtubule organizing center. It localises to the centrosome. Transcription factor that binds specifically to the DRE (dual repressor element) and represses HTR1A gene transcription in neuronal cells. The combination of calcium and ATP specifically inactivates the binding with FRE. May play a role in the altered regulation of HTR1A associated with anxiety and major depression. Mediates HDAC-independent repression of HTR1A promoter in neuronal cell. Performs essential function in controlling functional maturation of synapses. In Mus musculus (Mouse), this protein is Coiled-coil and C2 domain-containing protein 1A (Cc2d1a).